We begin with the raw amino-acid sequence, 89 residues long: Large ribosomal subunit protein eL34 (89 aa).

Residues 1–22 (MPAPRYKSGSSKKVYRKAPGNS) form a disordered region.

It belongs to the eukaryotic ribosomal protein eL34 family.

The protein is Large ribosomal subunit protein eL34 of Methanococcus maripaludis (strain DSM 14266 / JCM 13030 / NBRC 101832 / S2 / LL).